The chain runs to 1150 residues: Pyruvate carboxylase (1150 aa).

The region spanning 3–455 is the Biotin carboxylation domain; sequence QIKKLLVANR…TTKFIEETPE (453 aa). The ATP site is built by K119, K161, H211, and E278. Positions 123 to 319 constitute an ATP-grasp domain; that stretch reads RTTAIKADLP…IVKTQILVAA (197 aa). Residue R294 is part of the active site. Residues 533–802 enclose the Pyruvate carboxyltransferase domain; the sequence is VLLTDTTFRD…HLRTDIEGME (270 aa). 541–545 contacts substrate; it reads RDAHQ. 4 residues coordinate Mn(2+): D542, K712, H741, and H743. Residue K712 is modified to N6-carboxylysine. The region spanning 1071–1146 is the Biotinyl-binding domain; the sequence is KADKSNPSHI…ATGDLLIEIE (76 aa). The residue at position 1112 (K1112) is an N6-biotinyllysine.

Homotetramer. It depends on biotin as a cofactor.

It catalyses the reaction hydrogencarbonate + pyruvate + ATP = oxaloacetate + ADP + phosphate + H(+). In terms of biological role, catalyzes a 2-step reaction, involving the ATP-dependent carboxylation of the covalently attached biotin in the first step and the transfer of the carboxyl group to pyruvate in the second. This Staphylococcus aureus (strain Mu50 / ATCC 700699) protein is Pyruvate carboxylase (pycA).